A 293-amino-acid chain; its full sequence is Protein bcp-1 (293 aa).

The span at 1 to 12 (MGKKRSREEAQK) shows a compositional bias: basic and acidic residues. The disordered stretch occupies residues 1–35 (MGKKRSREEAQKEVVQNDPTVDKMDEDSDSSDSDE). Positions 24 to 35 (MDEDSDSSDSDE) are enriched in acidic residues.

It belongs to the BCP1 family.

Its subcellular location is the cytoplasm. It is found in the nucleus. Functionally, involved in nuclear export, actin cytoskeleton organization and vesicular transport. In Neurospora crassa (strain ATCC 24698 / 74-OR23-1A / CBS 708.71 / DSM 1257 / FGSC 987), this protein is Protein bcp-1 (bcp-1).